The sequence spans 299 residues: Taste receptor type 2 member 19 (299 aa).

Position 1 (Met1) is a topological domain, extracellular. The chain crosses the membrane as a helical span at residues 2 to 22 (MCFLLIISSILVVFAFVLGNV). At 23–55 (ANGFIALVNVIDWVNTRKISSAEQILTALVVSR) the chain is on the cytoplasmic side. A helical transmembrane segment spans residues 56–76 (IGLLWVMLFLWYATVFNSALY). The Extracellular segment spans residues 77 to 87 (GLEVRIVASNA). A helical membrane pass occupies residues 88 to 108 (WAVTNHFSMWLAASLSIFCLL). Topologically, residues 109-127 (KIANFSNLISLHLKKRIKS) are cytoplasmic. A helical transmembrane segment spans residues 128–148 (VVLVILLGPLVFLICNLAVIT). Residues 149-181 (MDERVWTKEYEGNVTWKIKLRNAIHLSSLTVTT) are Extracellular-facing. N-linked (GlcNAc...) asparagine glycosylation is present at Asn161. Residues 182–202 (LANLIPFTLSLICFLLLICSL) traverse the membrane as a helical segment. Residues 203–226 (CKHLKKMRLHSKGSQDPSTKVHIK) lie on the Cytoplasmic side of the membrane. A helical membrane pass occupies residues 227 to 247 (ALQTVTSFLMLFAIYFLCIIT). The Extracellular segment spans residues 248–259 (STWNLRTQQSKL). The chain crosses the membrane as a helical span at residues 260 to 280 (VLLLCQTVAIMYPSFHSFILI). At 281–299 (MGSRKLKQTFLSVLWQMTR) the chain is on the cytoplasmic side.

The protein belongs to the G-protein coupled receptor T2R family. Expressed in subsets of taste receptor cells of the tongue and exclusively in gustducin-positive cells.

The protein resides in the membrane. Functionally, receptor that may play a role in the perception of bitterness and is gustducin-linked. May play a role in sensing the chemical composition of the gastrointestinal content. The activity of this receptor may stimulate alpha gustducin, mediate PLC-beta-2 activation and lead to the gating of TRPM5. The protein is Taste receptor type 2 member 19 (TAS2R19) of Homo sapiens (Human).